We begin with the raw amino-acid sequence, 322 residues long: tRNA-dihydrouridine synthase B (322 aa).

Residues 16 to 18 (PMA) and Gln-70 contribute to the FMN site. Residue Cys-100 is the Proton donor of the active site. Residues Lys-139, 200–202 (NGD), and 224–225 (GR) each bind FMN.

Belongs to the Dus family. DusB subfamily. Requires FMN as cofactor.

It catalyses the reaction a 5,6-dihydrouridine in tRNA + NAD(+) = a uridine in tRNA + NADH + H(+). The catalysed reaction is a 5,6-dihydrouridine in tRNA + NADP(+) = a uridine in tRNA + NADPH + H(+). Catalyzes the synthesis of 5,6-dihydrouridine (D), a modified base found in the D-loop of most tRNAs, via the reduction of the C5-C6 double bond in target uridines. This Vibrio parahaemolyticus serotype O3:K6 (strain RIMD 2210633) protein is tRNA-dihydrouridine synthase B.